The chain runs to 255 residues: Wtf element wtf15 (255 aa).

The disordered stretch occupies residues 19–78 (KAGHEIDLEGSPPSEHNSEEKSTLPSNSDILTSANPVSQASETPDHSIESNTGSTQSPTS). Polar residues-rich tracts occupy residues 41 to 60 (TLPS…QASE) and 67 to 78 (ESNTGSTQSPTS). 4 consecutive transmembrane segments (helical) span residues 85 to 105 (FSFC…CVLP), 112 to 132 (FLIA…SGSI), 162 to 182 (FLKT…LVLL), and 187 to 208 (WGWK…SFCL).

Belongs to the WTF family.

It is found in the spore membrane. Functionally, may act in meiotic drive. The polypeptide is Wtf element wtf15 (Schizosaccharomyces pombe (strain 972 / ATCC 24843) (Fission yeast)).